Reading from the N-terminus, the 466-residue chain is tRNA(Ile)-lysidine synthase (466 aa).

42–47 (SGGVDS) lines the ATP pocket.

It belongs to the tRNA(Ile)-lysidine synthase family.

It is found in the cytoplasm. It catalyses the reaction cytidine(34) in tRNA(Ile2) + L-lysine + ATP = lysidine(34) in tRNA(Ile2) + AMP + diphosphate + H(+). Ligates lysine onto the cytidine present at position 34 of the AUA codon-specific tRNA(Ile) that contains the anticodon CAU, in an ATP-dependent manner. Cytidine is converted to lysidine, thus changing the amino acid specificity of the tRNA from methionine to isoleucine. The polypeptide is tRNA(Ile)-lysidine synthase (Anaplasma marginale (strain St. Maries)).